Consider the following 461-residue polypeptide: D-phenylhydantoinase (461 aa).

Residues His59, His61, and Lys151 each coordinate a divalent metal cation. Position 151 is an N6-carboxylysine (Lys151). Substrate is bound at residue Tyr156. 2 residues coordinate a divalent metal cation: His182 and His239. Residue Ser286 participates in substrate binding. Residue Asp313 participates in a divalent metal cation binding. Asn335 is a substrate binding site.

Belongs to the metallo-dependent hydrolases superfamily. Hydantoinase/dihydropyrimidinase family. In terms of assembly, homotetramer. It depends on a divalent metal cation as a cofactor. Post-translationally, carboxylation allows a single lysine to coordinate two divalent metal cations.

The catalysed reaction is D-5-phenylhydantoin + H2O = N-carbamoyl-D-phenylglycine + H(+). Its function is as follows. Catalyzes the stereospecific hydrolysis of the cyclic amide bond of D-hydantoin derivatives with an aromatic side chains at the 5'-position. Has no activity on dihydropyrimidines. The physiological function is unknown. This chain is D-phenylhydantoinase, found in Escherichia coli O6:K15:H31 (strain 536 / UPEC).